A 222-amino-acid chain; its full sequence is Thiopurine S-methyltransferase (222 aa).

W10, L45, E66, and R124 together coordinate S-adenosyl-L-methionine.

The protein belongs to the class I-like SAM-binding methyltransferase superfamily. TPMT family.

The protein localises to the cytoplasm. It catalyses the reaction S-adenosyl-L-methionine + a thiopurine = S-adenosyl-L-homocysteine + a thiopurine S-methylether.. The chain is Thiopurine S-methyltransferase from Methylococcus capsulatus (strain ATCC 33009 / NCIMB 11132 / Bath).